Reading from the N-terminus, the 281-residue chain is Cytochrome c oxidase subunit 3 (281 aa).

Residues 1–15 (MTHQTHAYHMVNPSP) are Mitochondrial matrix-facing. The helical transmembrane segment at 16 to 34 (WPLTGALSALLLTSGLIMW) threads the bilayer. Over 35–40 (FHYNSS) the chain is Mitochondrial intermembrane. The helical transmembrane segment at 41–66 (TLMFMGLTTMLLTMYQWWRDIIREGT) threads the bilayer. The Mitochondrial matrix portion of the chain corresponds to 67 to 72 (FQGHHT). The chain crosses the membrane as a helical span at residues 73 to 105 (PVVQKGLRYGMILFILSEVFFFIGFFWAFYHSS). Over 106–128 (LAPTPELGGCWPPTGIHPLNPLE) the chain is Mitochondrial intermembrane. Residues 129–152 (VPLLNTSILLASGVSITWAHHSLM) form a helical membrane-spanning segment. Topologically, residues 153–155 (EGN) are mitochondrial matrix. Residues 156–183 (RKQMIQALLITISLGLYFTILQAMEYYE) form a helical membrane-spanning segment. The Mitochondrial intermembrane segment spans residues 184–190 (ASFTISD). A helical membrane pass occupies residues 191–223 (GVYGSTFFVATGFHGLHVIIGSTFLIVCLLRQL). Residues 224–232 (FYHFTSTHH) lie on the Mitochondrial matrix side of the membrane. A helical transmembrane segment spans residues 233–256 (FGFEAAAWYWHFVDVVWLFLYVSI). Residues 257 to 281 (YWWGSYFSSMISTTDFQSLSSGSNQ) are Mitochondrial intermembrane-facing.

Belongs to the cytochrome c oxidase subunit 3 family. In terms of assembly, component of the cytochrome c oxidase (complex IV, CIV), a multisubunit enzyme composed of 14 subunits. The complex is composed of a catalytic core of 3 subunits MT-CO1, MT-CO2 and MT-CO3, encoded in the mitochondrial DNA, and 11 supernumerary subunits COX4I, COX5A, COX5B, COX6A, COX6B, COX6C, COX7A, COX7B, COX7C, COX8 and NDUFA4, which are encoded in the nuclear genome. The complex exists as a monomer or a dimer and forms supercomplexes (SCs) in the inner mitochondrial membrane with NADH-ubiquinone oxidoreductase (complex I, CI) and ubiquinol-cytochrome c oxidoreductase (cytochrome b-c1 complex, complex III, CIII), resulting in different assemblies (supercomplex SCI(1)III(2)IV(1) and megacomplex MCI(2)III(2)IV(2)).

The protein localises to the mitochondrion inner membrane. It carries out the reaction 4 Fe(II)-[cytochrome c] + O2 + 8 H(+)(in) = 4 Fe(III)-[cytochrome c] + 2 H2O + 4 H(+)(out). Functionally, component of the cytochrome c oxidase, the last enzyme in the mitochondrial electron transport chain which drives oxidative phosphorylation. The respiratory chain contains 3 multisubunit complexes succinate dehydrogenase (complex II, CII), ubiquinol-cytochrome c oxidoreductase (cytochrome b-c1 complex, complex III, CIII) and cytochrome c oxidase (complex IV, CIV), that cooperate to transfer electrons derived from NADH and succinate to molecular oxygen, creating an electrochemical gradient over the inner membrane that drives transmembrane transport and the ATP synthase. Cytochrome c oxidase is the component of the respiratory chain that catalyzes the reduction of oxygen to water. Electrons originating from reduced cytochrome c in the intermembrane space (IMS) are transferred via the dinuclear copper A center (CU(A)) of subunit 2 and heme A of subunit 1 to the active site in subunit 1, a binuclear center (BNC) formed by heme A3 and copper B (CU(B)). The BNC reduces molecular oxygen to 2 water molecules using 4 electrons from cytochrome c in the IMS and 4 protons from the mitochondrial matrix. The protein is Cytochrome c oxidase subunit 3 (MT-CO3) of Didelphis virginiana (North American opossum).